A 322-amino-acid chain; its full sequence is Replication factor C small subunit (322 aa).

ATP is bound at residue Gly-50–Thr-57.

The protein belongs to the activator 1 small subunits family. RfcS subfamily. Heteromultimer composed of small subunits (RfcS) and large subunits (RfcL).

Its function is as follows. Part of the RFC clamp loader complex which loads the PCNA sliding clamp onto DNA. The polypeptide is Replication factor C small subunit (Halobacterium salinarum (strain ATCC 700922 / JCM 11081 / NRC-1) (Halobacterium halobium)).